Reading from the N-terminus, the 241-residue chain is MAEASFYIGVIGNVISVLVFLSPVETFWKIVKRRSTEEYKSLPYICTLLGSSLWTYYGIVTPGEYLVSTVNGFGALVETIYVSLFLFYAPRHLKLKTVDVDAMLNVFFPIAAIVATRSAFEDEKMRSQSIGFISAGLNIIMYGSPLSAMKTVVTTKSVKYMPFWLSFFLFLNGAIWAVYALLQHDVFLLVPNGVGFVFGTMQLILYGIYRNAKPVGLSNGLSEIAQDEEEGLTSRVEPLLS.

Over 1–3 (MAE) the chain is Vacuolar. The helical transmembrane segment at 4-24 (ASFYIGVIGNVISVLVFLSPV) threads the bilayer. One can recognise a MtN3/slv 1 domain in the interval 6 to 92 (FYIGVIGNVI…SLFLFYAPRH (87 aa)). Over 25–41 (ETFWKIVKRRSTEEYKS) the chain is Cytoplasmic. A helical transmembrane segment spans residues 42 to 62 (LPYICTLLGSSLWTYYGIVTP). Residues 63–69 (GEYLVST) are Vacuolar-facing. A helical membrane pass occupies residues 70–90 (VNGFGALVETIYVSLFLFYAP). Over 91 to 94 (RHLK) the chain is Cytoplasmic. A helical transmembrane segment spans residues 95–115 (LKTVDVDAMLNVFFPIAAIVA). The Vacuolar segment spans residues 116-128 (TRSAFEDEKMRSQ). Residues 129 to 149 (SIGFISAGLNIIMYGSPLSAM) traverse the membrane as a helical segment. Residues 129–212 (SIGFISAGLN…LILYGIYRNA (84 aa)) form the MtN3/slv 2 domain. Residues 150 to 161 (KTVVTTKSVKYM) are Cytoplasmic-facing. Residues 162–182 (PFWLSFFLFLNGAIWAVYALL) traverse the membrane as a helical segment. Over 183-185 (QHD) the chain is Vacuolar. Residues 186 to 206 (VFLLVPNGVGFVFGTMQLILY) form a helical membrane-spanning segment. The Cytoplasmic segment spans residues 207-241 (GIYRNAKPVGLSNGLSEIAQDEEEGLTSRVEPLLS).

The protein belongs to the SWEET sugar transporter family. Forms homooligomers and heterooligomers with SWEET1, SWEET2, SWEET3, SWEET4, SWEET6, SWEET7, SWEET8, SWEET9, SWEET11, SWEET12, SWEET13, SWEET15 and SWEET16. As to expression, expressed in leaves at low levels, mostly in xylem and parenchyma. Highly expressed in the cortex of roots, predominantly in tips and mature regions, especially in tonoplasts. Also accumulates in cotyledons, stems, flowers, and siliques.

Its subcellular location is the vacuole membrane. Acts as a vacuolar hexose transporter. Regulates fructose (Fru) homeostasis in leaves and roots by exporting/importing Fru through the tonoplast regarding metabolic demand. The sequence is that of Bidirectional sugar transporter SWEET17 from Arabidopsis thaliana (Mouse-ear cress).